Reading from the N-terminus, the 155-residue chain is Ribosomal RNA large subunit methyltransferase H (155 aa).

S-adenosyl-L-methionine is bound by residues Leu73, Gly104, and 123–128 (ISKMTF).

It belongs to the RNA methyltransferase RlmH family. In terms of assembly, homodimer.

The protein resides in the cytoplasm. The catalysed reaction is pseudouridine(1915) in 23S rRNA + S-adenosyl-L-methionine = N(3)-methylpseudouridine(1915) in 23S rRNA + S-adenosyl-L-homocysteine + H(+). In terms of biological role, specifically methylates the pseudouridine at position 1915 (m3Psi1915) in 23S rRNA. This chain is Ribosomal RNA large subunit methyltransferase H, found in Francisella philomiragia subsp. philomiragia (strain ATCC 25017 / CCUG 19701 / FSC 153 / O#319-036).